Reading from the N-terminus, the 187-residue chain is RNA pyrophosphohydrolase (187 aa).

One can recognise a Nudix hydrolase domain in the interval 6-149 (GYRANVGIIL…KRQVYRLALT (144 aa)). Residues 38–59 (GGIKSGETPTQAMYRELAEETG) carry the Nudix box motif.

The protein belongs to the Nudix hydrolase family. RppH subfamily. Requires a divalent metal cation as cofactor.

In terms of biological role, accelerates the degradation of transcripts by removing pyrophosphate from the 5'-end of triphosphorylated RNA, leading to a more labile monophosphorylated state that can stimulate subsequent ribonuclease cleavage. The polypeptide is RNA pyrophosphohydrolase (Nitrosomonas eutropha (strain DSM 101675 / C91 / Nm57)).